Consider the following 258-residue polypeptide: Acetylglutamate kinase (258 aa).

Substrate-binding positions include 41-42 (GG), arginine 63, and asparagine 156.

The protein belongs to the acetylglutamate kinase family. ArgB subfamily.

The protein resides in the cytoplasm. It carries out the reaction N-acetyl-L-glutamate + ATP = N-acetyl-L-glutamyl 5-phosphate + ADP. It participates in amino-acid biosynthesis; L-arginine biosynthesis; N(2)-acetyl-L-ornithine from L-glutamate: step 2/4. In terms of biological role, catalyzes the ATP-dependent phosphorylation of N-acetyl-L-glutamate. The protein is Acetylglutamate kinase of Bacillus licheniformis (strain ATCC 14580 / DSM 13 / JCM 2505 / CCUG 7422 / NBRC 12200 / NCIMB 9375 / NCTC 10341 / NRRL NRS-1264 / Gibson 46).